The primary structure comprises 270 residues: Replication protein A 32 kDa subunit (270 aa).

M1 is subject to N-acetylmethionine. A phosphoserine; by PRKDC mark is found at S4 and S8. Positions 20 to 41 (YTQSPGGFGSPTPSQAEKKSRV) are disordered. T21 carries the phosphothreonine; by PRKDC modification. Phosphoserine; by CDK2 is present on S23. S29 bears the Phosphoserine; by CDK1 mark. S33 bears the Phosphoserine; by PRKDC mark. Residues K37 and K38 each participate in a glycyl lysine isopeptide (Lys-Gly) (interchain with G-Cter in ubiquitin) cross-link. The OB DNA-binding region spans 74-148 (VTIVGIIRHA…KSLVAFKIIP (75 aa)). The disordered stretch occupies residues 171–192 (KPNSQASAGRPSMSNPGMSEPG). The interaction with RAD52, TIPIN, UNG and XPA stretch occupies residues 187–270 (GMSEPGNFSG…DDHFKSTDAE (84 aa)).

The protein belongs to the replication factor A protein 2 family. As to quaternary structure, component of the replication protein A complex (RPA/RP-A), a heterotrimeric complex composed of RPA1, RPA2 and RPA3. Interacts with PRPF19; the PRP19-CDC5L complex is recruited to the sites of DNA repair where it ubiquitinates the replication protein A complex (RPA). Interacts with SERTAD3. Interacts with TIPIN. Interacts with TIMELESS. Interacts with PPP4R2; the interaction is direct, DNA damage-dependent and mediates the recruitment of the PP4 catalytic subunit PPP4C. Interacts (hyperphosphorylated) with RAD51. Interacts with SMARCAL1; the interaction is direct and mediates the recruitment to the RPA complex of SMARCAL1. Interacts with RAD52 and XPA; those interactions are direct and associate RAD52 and XPA to the RPA complex. Interacts with FBH1. Interacts with ETAA1; the interaction is direct and promotes ETAA1 recruitment at stalled replication forks. Interacts with DDI2. Interacts (in unphosphorylated form via N-terminus) with EIF4EBP3; the interaction enhances EIF4EBP3-mediated inhibition of EIF4E-mediated mRNA nuclear export. Interacts with nuclear UNG (isoform 2); this interaction mediates UNG recruitment to RPA-coated single-stranded DNA at stalled replication forks. Post-translationally, differentially phosphorylated throughout the cell cycle, becoming phosphorylated at the G1-S transition and dephosphorylated in late mitosis. Mainly phosphorylated at Ser-23 and Ser-29, by cyclin A-CDK2 and cyclin B-CDK1, respectively during DNA replication and mitosis. Dephosphorylation may require the serine/threonine-protein phosphatase 4. Phosphorylation at Ser-23 and Ser-29 is a prerequisite for further phosphorylation. Becomes hyperphosphorylated on additional residues including Ser-4, Ser-8, Thr-21 and Ser-33 in response to DNA damage. Hyperphosphorylation is mediated by ATM, ATR and PRKDC. Primarily recruited to DNA repair nuclear foci as a hypophosphorylated form it undergoes subsequent hyperphosphorylation, catalyzed by ATR. Hyperphosphorylation is required for RAD51 recruitment to chromatin and efficient DNA repair. Phosphorylation at Thr-21 depends upon RFWD3 presence. In terms of processing, DNA damage-induced 'Lys-63'-linked polyubiquitination by PRPF19 mediates ATRIP recruitment to the RPA complex at sites of DNA damage and activation of ATR. Ubiquitinated by RFWD3 at stalled replication forks in response to DNA damage: ubiquitination by RFWD3 does not lead to degradation by the proteasome and promotes removal of the RPA complex from stalled replication forks, promoting homologous recombination.

The protein localises to the nucleus. It is found in the PML body. In terms of biological role, as part of the heterotrimeric replication protein A complex (RPA/RP-A), binds and stabilizes single-stranded DNA intermediates, that form during DNA replication or upon DNA stress. It prevents their reannealing and in parallel, recruits and activates different proteins and complexes involved in DNA metabolism. Thereby, it plays an essential role both in DNA replication and the cellular response to DNA damage. In the cellular response to DNA damage, the RPA complex controls DNA repair and DNA damage checkpoint activation. Through recruitment of ATRIP activates the ATR kinase a master regulator of the DNA damage response. It is required for the recruitment of the DNA double-strand break repair factors RAD51 and RAD52 to chromatin in response to DNA damage. Also recruits to sites of DNA damage proteins like XPA and XPG that are involved in nucleotide excision repair and is required for this mechanism of DNA repair. Also plays a role in base excision repair (BER) probably through interaction with UNG. Also recruits SMARCAL1/HARP, which is involved in replication fork restart, to sites of DNA damage. May also play a role in telomere maintenance. The polypeptide is Replication protein A 32 kDa subunit (Mus musculus (Mouse)).